Reading from the N-terminus, the 509-residue chain is Maturase K (509 aa).

It belongs to the intron maturase 2 family. MatK subfamily.

It is found in the plastid. It localises to the chloroplast. Its function is as follows. Usually encoded in the trnK tRNA gene intron. Probably assists in splicing its own and other chloroplast group II introns. The chain is Maturase K from Nicotiana sylvestris (Wood tobacco).